The sequence spans 146 residues: Large ribosomal subunit protein uL13 (146 aa).

Belongs to the universal ribosomal protein uL13 family. Part of the 50S ribosomal subunit.

Functionally, this protein is one of the early assembly proteins of the 50S ribosomal subunit, although it is not seen to bind rRNA by itself. It is important during the early stages of 50S assembly. The polypeptide is Large ribosomal subunit protein uL13 (Mycoplasma genitalium (strain ATCC 33530 / DSM 19775 / NCTC 10195 / G37) (Mycoplasmoides genitalium)).